We begin with the raw amino-acid sequence, 289 residues long: Oxaloacetate decarboxylase 1 (289 aa).

Serine 50 serves as a coordination point for substrate. A Mg(2+)-binding site is contributed by aspartate 88. Substrate contacts are provided by arginine 159 and histidine 235.

This sequence belongs to the isocitrate lyase/PEP mutase superfamily. Oxaloacetate decarboxylase family. Homotetramer; dimer of dimers. The cofactor is Mg(2+).

It catalyses the reaction oxaloacetate + H(+) = pyruvate + CO2. Catalyzes the decarboxylation of oxaloacetate into pyruvate. Seems to play a role in maintaining cellular concentrations of bicarbonate and pyruvate. This chain is Oxaloacetate decarboxylase 1, found in Pseudomonas fluorescens (strain Pf0-1).